The primary structure comprises 167 residues: uncharacterized protein (167 aa).

Over residues 1 to 13 the composition is skewed to basic and acidic residues; sequence MQGDIRRKKDLLP. Disordered regions lie at residues 1-26 and 67-167; these read MQGDIRRKKDLLPRYKTGSKYNSRRR and ESHS…ILDN. Over residues 71–80 the composition is skewed to low complexity; that stretch reads SDVSASASDH. Residues 102–156 show a composition bias toward basic and acidic residues; that stretch reads VPKEKFNNEVAKQQEVKNLENDLKPQIDSEKQKQINKDKKEQKQQLQKEKQDLAK.

This is an uncharacterized protein from Saccharomyces cerevisiae (strain ATCC 204508 / S288c) (Baker's yeast).